Consider the following 321-residue polypeptide: Ferredoxin--NADP reductase (321 aa).

FAD-binding residues include D34, Q42, Y47, V87, F119, D278, and T319.

This sequence belongs to the ferredoxin--NADP reductase type 2 family. In terms of assembly, homodimer. FAD serves as cofactor.

It carries out the reaction 2 reduced [2Fe-2S]-[ferredoxin] + NADP(+) + H(+) = 2 oxidized [2Fe-2S]-[ferredoxin] + NADPH. This chain is Ferredoxin--NADP reductase, found in Streptococcus pneumoniae serotype 4 (strain ATCC BAA-334 / TIGR4).